The following is a 199-amino-acid chain: Superoxide dismutase [Mn/Fe] 2 (199 aa).

His-27, His-81, Asp-161, and His-165 together coordinate Fe(3+). Positions 27, 81, 161, and 165 each coordinate Mn(2+).

This sequence belongs to the iron/manganese superoxide dismutase family. In terms of assembly, homodimer. Can also form a heterodimer with SodA. It depends on Mn(2+) as a cofactor. Fe(3+) is required as a cofactor.

It catalyses the reaction 2 superoxide + 2 H(+) = H2O2 + O2. Functionally, destroys superoxide anion radicals which are normally produced within the cells and which are toxic to biological systems. Catalyzes the dismutation of superoxide anion radicals into O2 and H2O2 by successive reduction and oxidation of the transition metal ion at the active site. The sequence is that of Superoxide dismutase [Mn/Fe] 2 (sodM) from Staphylococcus aureus (strain USA300).